The following is a 394-amino-acid chain: NAD(P)H-quinone oxidoreductase subunit H (394 aa).

Belongs to the complex I 49 kDa subunit family. In terms of assembly, NDH-1 can be composed of about 15 different subunits; different subcomplexes with different compositions have been identified which probably have different functions.

The protein localises to the cellular thylakoid membrane. The enzyme catalyses a plastoquinone + NADH + (n+1) H(+)(in) = a plastoquinol + NAD(+) + n H(+)(out). It catalyses the reaction a plastoquinone + NADPH + (n+1) H(+)(in) = a plastoquinol + NADP(+) + n H(+)(out). In terms of biological role, NDH-1 shuttles electrons from an unknown electron donor, via FMN and iron-sulfur (Fe-S) centers, to quinones in the respiratory and/or the photosynthetic chain. The immediate electron acceptor for the enzyme in this species is believed to be plastoquinone. Couples the redox reaction to proton translocation, and thus conserves the redox energy in a proton gradient. Cyanobacterial NDH-1 also plays a role in inorganic carbon-concentration. This Thermosynechococcus vestitus (strain NIES-2133 / IAM M-273 / BP-1) protein is NAD(P)H-quinone oxidoreductase subunit H.